The following is a 411-amino-acid chain: Tyrosine--tRNA ligase (411 aa).

Tyr-34 contributes to the L-tyrosine binding site. Residues 39–48 (CTATSLHIGS) carry the 'HIGH' region motif. Positions 171 and 175 each coordinate L-tyrosine. The short motif at 231–235 (KMGKT) is the 'KMSKS' region element. Lys-234 is a binding site for ATP. In terms of domain architecture, S4 RNA-binding spans 345 to 411 (ISAYELFHEA…GKKKHILVRV (67 aa)).

Belongs to the class-I aminoacyl-tRNA synthetase family. TyrS type 1 subfamily. Homodimer.

The protein resides in the cytoplasm. The enzyme catalyses tRNA(Tyr) + L-tyrosine + ATP = L-tyrosyl-tRNA(Tyr) + AMP + diphosphate + H(+). In terms of biological role, catalyzes the attachment of tyrosine to tRNA(Tyr) in a two-step reaction: tyrosine is first activated by ATP to form Tyr-AMP and then transferred to the acceptor end of tRNA(Tyr). This Rickettsia conorii (strain ATCC VR-613 / Malish 7) protein is Tyrosine--tRNA ligase.